The following is a 599-amino-acid chain: Elongation factor 4 (599 aa).

One can recognise a tr-type G domain in the interval 2–184 (KNIRNFSIIA…RLVRDIPPPE (183 aa)). GTP contacts are provided by residues 14–19 (DHGKST) and 131–134 (NKID).

Belongs to the TRAFAC class translation factor GTPase superfamily. Classic translation factor GTPase family. LepA subfamily.

The protein localises to the cell inner membrane. The enzyme catalyses GTP + H2O = GDP + phosphate + H(+). Its function is as follows. Required for accurate and efficient protein synthesis under certain stress conditions. May act as a fidelity factor of the translation reaction, by catalyzing a one-codon backward translocation of tRNAs on improperly translocated ribosomes. Back-translocation proceeds from a post-translocation (POST) complex to a pre-translocation (PRE) complex, thus giving elongation factor G a second chance to translocate the tRNAs correctly. Binds to ribosomes in a GTP-dependent manner. The polypeptide is Elongation factor 4 (Citrobacter koseri (strain ATCC BAA-895 / CDC 4225-83 / SGSC4696)).